A 799-amino-acid chain; its full sequence is MNLQLVFWIGLISLICSVFGQTDKNRCLKANAKSCGECIQAGPNCGWCTNTTFLQEGMPTSARCDDLEALKKKGCHPSDIENPRGSQTIKKNKNVTNRSKGMAEKLRPEDITQIQPQQLLLKLRSGEPQKFTLKFKRAEDYPIDLYYLMDLSYSMKDDLENVKSLGTDLMNEMRRITSDFRIGFGSFVEKTVMPYISTTPAKLRNPCTSEQNCTSPFSYKNVLSLTDRGEFFNELVGQQRISGNLDSPEGGFDAIMQVAVCGSLIGWRNVTRLLVFSTDAGFHFAGDGKLGGIVLPNDGQCHLENNVYTMSHYYDYPSIAHLVQKLSENNIQTIFAVTEEFQPVYKELKNLIPKSAVGTLSGNSSNVIQLIIDAYNSLSSEVILENSKLPDGVTINYKSYCKNGVNGTGENGRKCSNISIGDEVQFEISITANKCPNKESENQLKLNPLGFTEEVEVVLQFICKCNCQSHGIPASPKCHEGNGTFECGACRCNEGRVGRHCECSTDEVNSEDMDAYCRKENSSEICSNNGECVCGQCVCRKRENTNEIYSGKFCECDNFNCDRSNGLICGGNGVCRCRVCECYPNYTGSACDCSLDTVPCVATNGQICNGRGICECGACKCTDPKFQGPTCETCQTCLGVCAEHKECVQCRAFNKGEKKDTCAQECSHFNLTKVESREKLPQPVQVDPVTHCKEKDIDDCWFYFTYSVNSKGEAHVHVVETPDCPTGPDIIPIVAGVVAGIVLIGLALLLIWKLLMIIHDRREFAKFEKEKMNAKWDTGENPIYKSAVTTVVNPKYEGK.

An N-terminal signal peptide occupies residues 1–20 (MNLQLVFWIGLISLICSVFG). Over 21–729 (QTDKNRCLKA…ETPDCPTGPD (709 aa)) the chain is Extracellular. One can recognise a PSI domain in the interval 26 to 76 (RCLKANAKSCGECIQAGPNCGWCTNTTFLQEGMPTSARCDDLEALKKKGCH). Intrachain disulfides connect C27/C45, C35/C465, C38/C64, C48/C75, C207/C213, C261/C301, C401/C415, C435/C463, C467/C487, C478/C490, C492/C501, C503/C534, C517/C532, C526/C537, C539/C554, C556/C577, C561/C575, C569/C580, C582/C591, C593/C616, C600/C614, C608/C619, C621/C631, C634/C637, C641/C692, C647/C666, C650/C662, and C700/C724. 3 N-linked (GlcNAc...) asparagine glycosylation sites follow: N50, N94, and N97. Positions 140 to 378 (DYPIDLYYLM…QLIIDAYNSL (239 aa)) constitute a VWFA domain. 2 residues coordinate Mg(2+): S152 and S154. S154, D157, D158, and E189 together coordinate Ca(2+). A CX3CL1-binding region spans residues 207-213 (CTSEQNC). N-linked (GlcNAc...) asparagine glycosylation is present at N212. Positions 244, 246, 248, and 249 each coordinate Ca(2+). E249 contacts Mg(2+). The N-linked (GlcNAc...) asparagine glycan is linked to N269. Positions 295-314 (LPNDGQCHLENNVYTMSHYY) are CX3CL1-binding. G362 contacts Ca(2+). N-linked (GlcNAc...) asparagine glycosylation is found at N363, N406, and N417. An interaction with TMEM182 region spans residues 383–466 (ILENSKLPDG…VVLQFICKCN (84 aa)). I-EGF domains follow at residues 467-502 (CQSH…RHCE), 503-555 (CSTD…KFCE), 556-592 (CDNF…SACD), and 593-632 (CSLD…PTCE). The N-linked (GlcNAc...) asparagine glycan is linked to N482. N-linked (GlcNAc...) asparagine glycosylation occurs at N521. N585 is a glycosylation site (N-linked (GlcNAc...) asparagine). N670 carries N-linked (GlcNAc...) asparagine glycosylation. The chain crosses the membrane as a helical span at residues 730–752 (IIPIVAGVVAGIVLIGLALLLIW). At 753-799 (KLLMIIHDRREFAKFEKEKMNAKWDTGENPIYKSAVTTVVNPKYEGK) the chain is on the cytoplasmic side. A signal for sorting from recycling endosomes; interaction with ACAP1 region spans residues 763 to 768 (EFAKFE). T778 bears the Phosphothreonine mark. At Y784 the chain carries Phosphotyrosine. Position 786 is a phosphoserine (S786). An interaction with ITGB1BP1 region spans residues 786-793 (SAVTTVVN). T790 is modified (phosphothreonine). At K795 the chain carries N6-acetyllysine; alternate. A Glycyl lysine isopeptide (Lys-Gly) (interchain with G-Cter in SUMO1); alternate cross-link involves residue K795.

Belongs to the integrin beta chain family. Interacts with seprase FAP (seprase); the interaction occurs at the cell surface of invadopodia membrane in a collagen-dependent manner. Heterodimer of an alpha and a beta subunit. Beta-1 associates with either alpha-1, alpha-2, alpha-3, alpha-4, alpha-5, alpha-6, alpha-7, alpha-8, alpha-9, alpha-10, alpha-11 or alpha-V. ITGA6:ITGB1 is found in a complex with CD9; interaction takes place in oocytes and is involved in sperm-egg fusion. Binds LGALS3BP and NMRK2, when associated with alpha-7, but not with alpha-5. Interacts with FLNA, FLNB, FLNC and RANBP9. Interacts with KRT1 in the presence of RACK1 and SRC. Interacts with JAML; integrin alpha-4/beta-1 may regulate leukocyte to endothelial cells adhesion by controlling JAML homodimerization. Interacts with RAB21. Interacts (via the cytoplasmic region) with RAB25 (via the hypervariable C-terminal region). Interacts with MYO10. Interacts with ITGB1BP1 (via C-terminal region); the interaction is a prerequisite for focal adhesion disassembly. Interacts with TLN1; the interaction is prevented by competitive binding of ITGB1BP1. Interacts with ACAP1; required for ITGB1 recycling. Interacts with ASAP3. Interacts with FERMT2; the interaction is inhibited in presence of ITGB1BP1. Interacts with DAB2. Interacts with FGR and HCK. Interacts with alpha-7A and alpha-7B in adult skeletal muscle. Interacts with alpha-7B in cardiomyocytes of adult heart. Interacts with EMP2; the interaction may be direct or indirect and ITGB1 has a heterodimer form. ITGA5:ITGB1 interacts with CCN3. ITGA4:ITGB1 is found in a ternary complex with CX3CR1 and CX3CL1. ITGA5:ITGB1 interacts with FBN1. ITGA5:ITGB1 acts as a receptor for fibronectin FN1 and mediates R-G-D-dependent cell adhesion to FN1. ITGA5:ITGB1 interacts with IL1B. Interacts with MDK. ITGA4:ITGB1 interacts with MDK; this interaction mediates MDK-induced osteoblast cells migration through PXN phosphorylation. ITGA6:ITGB1 interacts with MDK; this interaction mediates MDK-induced neurite-outgrowth. ITGA5:ITGB1 interacts with ACE2. Interacts with TMEM182 and LAMB1. Interacts with tensin TNS3; TNS3 also interacts with PEAK1, thus acting as an adapter molecule to bridge the association of PEAK1 with ITGB1. Interacts with tensin TNS4; the interaction displaces tensin TNS3 from the ITGB1 cytoplasmic tail and promotes ITGB1 stability. Integrin ITGA9:ITGB1 interacts with SPP1/OPN (via N-terminus). Integrin ITGA9:ITGB1 interacts with TNC/TNFN3 (via the 3rd Fibronectin type-III domain). Integrins ITGA4:ITGB1 and ITGA9:ITGB1 interact with SVEP1 (via Sushi domain 21); thereby inhibit Ca(2+) intracellular signaling and as a result repress vasocontraction. ITGA4:ITGB1 and ITGA5:ITGB1 interacts with SELP. ITGA5:ITGB1 interacts with IGFBP1. ITGA4:ITGB1 interacts with BCAM. Interacts with ADGRG6.

It is found in the cell membrane. It localises to the cell projection. The protein resides in the invadopodium membrane. Its subcellular location is the ruffle membrane. The protein localises to the recycling endosome. It is found in the melanosome. It localises to the lamellipodium. The protein resides in the ruffle. Its subcellular location is the cell junction. The protein localises to the focal adhesion. Integrins alpha-1/beta-1, alpha-2/beta-1, alpha-10/beta-1 and alpha-11/beta-1 are receptors for collagen. Integrins alpha-1/beta-1 and alpha-2/beta-2 recognize the proline-hydroxylated sequence G-F-P-G-E-R in collagen. Integrins alpha-2/beta-1, alpha-3/beta-1, alpha-4/beta-1, alpha-5/beta-1, alpha-8/beta-1, alpha-10/beta-1, alpha-11/beta-1 and alpha-V/beta-1 are receptors for fibronectin. Alpha-4/beta-1 recognizes one or more domains within the alternatively spliced CS-1 and CS-5 regions of fibronectin. Integrin alpha-5/beta-1 is a receptor for fibrinogen. Integrin alpha-1/beta-1, alpha-2/beta-1, alpha-6/beta-1 and alpha-7/beta-1 are receptors for lamimin. Integrin alpha-6/beta-1 (ITGA6:ITGB1) is present in oocytes and is involved in sperm-egg fusion. Integrin alpha-4/beta-1 is a receptor for VCAM1 and recognizes the sequence Q-I-D-S in VCAM1. Integrin alpha-9/beta-1 is a receptor for VCAM1, cytotactin and osteopontin. It recognizes the sequence A-E-I-D-G-I-E-L in cytotactin. Integrin alpha-3/beta-1 is a receptor for epiligrin, thrombospondin and CSPG4. Integrin alpha-3/beta-1 provides a docking site for FAP (seprase) at invadopodia plasma membranes in a collagen-dependent manner and hence may participate in the adhesion, formation of invadopodia and matrix degradation processes, promoting cell invasion. Alpha-3/beta-1 may mediate with LGALS3 the stimulation by CSPG4 of endothelial cells migration. Integrin alpha-V/beta-1 is a receptor for vitronectin. Beta-1 integrins recognize the sequence R-G-D in a wide array of ligands. When associated with alpha-7/beta-1 integrin, regulates cell adhesion and laminin matrix deposition. Involved in promoting endothelial cell motility and angiogenesis. Involved in osteoblast compaction through the fibronectin fibrillogenesis cell-mediated matrix assembly process and the formation of mineralized bone nodules. May be involved in up-regulation of the activity of kinases such as PKC via binding to KRT1. Together with KRT1 and RACK1, serves as a platform for SRC activation or inactivation. Plays a mechanistic adhesive role during telophase, required for the successful completion of cytokinesis. ITGA4:ITGB1 binds to fractalkine (CX3CL1) and may act as its coreceptor in CX3CR1-dependent fractalkine signaling. ITGA4:ITGB1 and ITGA5:ITGB1 bind to PLA2G2A via a site (site 2) which is distinct from the classical ligand-binding site (site 1) and this induces integrin conformational changes and enhanced ligand binding to site 1. ITGA5:ITGB1 acts as a receptor for fibrillin-1 (FBN1) and mediates R-G-D-dependent cell adhesion to FBN1. ITGA5:ITGB1 is a receptor for IL1B and binding is essential for IL1B signaling. ITGA5:ITGB3 is a receptor for soluble CD40LG and is required for CD40/CD40LG signaling. Plays an important role in myoblast differentiation and fusion during skeletal myogenesis. ITGA9:ITGB1 may play a crucial role in SVEP1/polydom-mediated myoblast cell adhesion. Integrins ITGA9:ITGB1 and ITGA4:ITGB1 repress PRKCA-mediated L-type voltage-gated channel Ca(2+) influx and ROCK-mediated calcium sensitivity in vascular smooth muscle cells via their interaction with SVEP1, thereby inhibit vasocontraction. This Rattus norvegicus (Rat) protein is Integrin beta-1 (Itgb1).